A 301-amino-acid polypeptide reads, in one-letter code: Multifunctional dioxygenase ausE (301 aa).

Arg-72 and Gln-127 together coordinate substrate. Residues His-130 and Asp-132 each coordinate Fe cation. Thr-167 is a binding site for substrate. His-214 is a Fe cation binding site. Residue Arg-226 participates in substrate binding.

The protein belongs to the PhyH family. As to quaternary structure, homodimer. Requires Fe cation as cofactor.

The enzyme catalyses preaustinoid A1 + 2-oxoglutarate + O2 = preaustinoid A2 + succinate + CO2 + H2O. It carries out the reaction preaustinoid A2 + 2-oxoglutarate + O2 = preaustinoid A3 + succinate + CO2 + H2O. The catalysed reaction is berkeleyone A + 2-oxoglutarate + O2 = preaustinoid A + succinate + CO2 + H2O. It participates in secondary metabolite biosynthesis; terpenoid biosynthesis. In terms of biological role, multifunctional dioxygenase; part of the gene cluster A that mediates the biosynthesis of the fungal meroterpenoid acetoxydehydroaustin. The first step of the pathway is the synthesis of 3,5-dimethylorsellinic acid by the polyketide synthase ausA. 3,5-dimethylorsellinic acid is then prenylated by the polyprenyl transferase ausN. Further epoxidation by the FAD-dependent monooxygenase ausM and cyclization by the probable terpene cyclase ausL lead to the formation of protoaustinoid A. Protoaustinoid A is then oxidized to spiro-lactone preaustinoid A3 by the combined action of the FAD-binding monooxygenases ausB and ausC, and the dioxygenase ausE. Acid-catalyzed keto-rearrangement and ring contraction of the tetraketide portion of preaustinoid A3 by ausJ lead to the formation of preaustinoid A4. The aldo-keto reductase ausK, with the help of ausH, is involved in the next step by transforming preaustinoid A4 into isoaustinone which is in turn hydroxylated by the P450 monooxygenase ausI to form austinolide. The cytochrome P450 monooxygenase ausG then modifies austinolide to austinol. Austinol is further acetylated to austin by the O-acetyltransferase ausP, which spontaneously changes to dehydroaustin. The cytochrome P450 monooxygenase then converts dehydroaustin is into 7-dehydrodehydroaustin. The hydroxylation catalyzed by ausR permits the second O-acetyltransferase ausQ to add an additional acetyl group to the molecule, leading to the formation of acetoxydehydroaustin. Due to genetic rearrangements of the clusters and the subsequent loss of some enzymes, the end product of the Penicillium brasilianum austinoid biosynthesis clusters is acetoxydehydroaustin. This chain is Multifunctional dioxygenase ausE, found in Penicillium brasilianum.